Here is an 843-residue protein sequence, read N- to C-terminus: Glycogen phosphorylase, brain form (843 aa).

The residue at position 2 (Ala-2) is an N-acetylalanine. Ser-15 is subject to Phosphoserine; by PHK; in form phosphorylase A. 3 residues coordinate AMP: Asp-43, Tyr-197, and Arg-310. Phosphotyrosine is present on Tyr-197. Tyr-473 is subject to Phosphotyrosine. Lys-569 is a binding site for pyridoxal 5'-phosphate. The tract at residues 677–678 (TG) is pyridoxal 5'-phosphate. N6-(pyridoxal phosphate)lysine is present on Lys-681.

This sequence belongs to the glycogen phosphorylase family. As to quaternary structure, homodimer. Dimers associate into a tetramer to form the enzymatically active phosphorylase A. Requires pyridoxal 5'-phosphate as cofactor. Phosphorylation of Ser-15 converts phosphorylase B (unphosphorylated) to phosphorylase A.

It catalyses the reaction [(1-&gt;4)-alpha-D-glucosyl](n) + phosphate = [(1-&gt;4)-alpha-D-glucosyl](n-1) + alpha-D-glucose 1-phosphate. Its activity is regulated as follows. Activity of phosphorylase is controlled both by allosteric means (through the non-covalent binding of metabolites) and by covalent modification. Thus AMP allosterically activates, whereas ATP, ADP, and glucose-6-phosphate allosterically inhibit, phosphorylase B. Its function is as follows. Glycogen phosphorylase that regulates glycogen mobilization. Phosphorylase is an important allosteric enzyme in carbohydrate metabolism. Enzymes from different sources differ in their regulatory mechanisms and in their natural substrates. However, all known phosphorylases share catalytic and structural properties. The polypeptide is Glycogen phosphorylase, brain form (PYGB) (Pongo abelii (Sumatran orangutan)).